A 689-amino-acid polypeptide reads, in one-letter code: Outer spore wall assembly protein SHE10 (689 aa).

An N-terminal signal peptide occupies residues 1-18 (MKILTKFFLLLVVTTCSL). Positions 259–308 (TKAKSKSKPRVNASASARGNARAGAKAGAKAGTSEISASATADPTTSASA) are disordered. Residues 270–308 (NASASARGNARAGAKAGAKAGTSEISASATADPTTSASA) are compositionally biased toward low complexity. The stretch at 406 to 435 (NKTKTVSEVLQNRYKNLNRAIQDINCTCET) forms a coiled coil. Residues 610–626 (EQESKQREDSPRMDRDS) are compositionally biased toward basic and acidic residues. Residues 610 to 689 (EQESKQREDS…TVQNNVTLQI (80 aa)) are disordered. Polar residues-rich tracts occupy residues 627-637 (TQNVENSNTTT), 655-670 (QNGTNSTEKFSAGPDS), and 677-689 (METTVQNNVTLQI).

The protein belongs to the SHE10 family. In terms of assembly, component of the mitochondria-localized RNase mitochondrial RNA-processing (RNase MRP) composed of one single RNA encoded by the NME1 gene and at least 31 proteins. Absent in the nucleus-localized RNase MRP (NuMRP).

It is found in the mitochondrion. Functionally, involved in spore wall assembly. May be a component of the mitochondrial RNase MRP (MtMRP), a ribonucleoprotein endoribonuclease involved in the cleaving RNA transcripts to generate primers for DNA replication in mitochondria. This chain is Outer spore wall assembly protein SHE10, found in Zygosaccharomyces rouxii (strain ATCC 2623 / CBS 732 / NBRC 1130 / NCYC 568 / NRRL Y-229).